Here is a 298-residue protein sequence, read N- to C-terminus: Ectoine dioxygenase (298 aa).

The segment covering 1–18 (MLQQAIDRDPVDRIDRYP) has biased composition (basic and acidic residues). The segment at 1–26 (MLQQAIDRDPVDRIDRYPTRTAEPAP) is disordered. Position 133 (Gln133) interacts with L-ectoine. Residues His150, Asp152, and His251 each contribute to the Fe cation site.

It belongs to the PhyH family. EctD subfamily. Homodimer. It depends on Fe(2+) as a cofactor.

The enzyme catalyses L-ectoine + 2-oxoglutarate + O2 = 5-hydroxyectoine + succinate + CO2. Functionally, involved in the biosynthesis of 5-hydroxyectoine, called compatible solute, which helps organisms to survive extreme osmotic stress by acting as a highly soluble organic osmolyte. Catalyzes the 2-oxoglutarate-dependent selective hydroxylation of L-ectoine to yield (4S,5S)-5-hydroxyectoine. The sequence is that of Ectoine dioxygenase from Nocardia farcinica (strain IFM 10152).